The sequence spans 256 residues: Pimeloyl-[acyl-carrier protein] methyl ester esterase (256 aa).

An AB hydrolase-1 domain is found at 15-242 (HLVLLHGWGL…AAHAPFISHP (228 aa)). Substrate-binding positions include tryptophan 22, 82 to 83 (SL), and 143 to 147 (FLALQ). The Nucleophile role is filled by serine 82. Active-site residues include aspartate 207 and histidine 235. Position 235 (histidine 235) interacts with substrate.

The protein belongs to the AB hydrolase superfamily. Carboxylesterase BioH family. In terms of assembly, monomer.

The protein localises to the cytoplasm. The catalysed reaction is 6-carboxyhexanoyl-[ACP] methyl ester + H2O = 6-carboxyhexanoyl-[ACP] + methanol + H(+). It functions in the pathway cofactor biosynthesis; biotin biosynthesis. Functionally, the physiological role of BioH is to remove the methyl group introduced by BioC when the pimeloyl moiety is complete. It allows to synthesize pimeloyl-ACP via the fatty acid synthetic pathway through the hydrolysis of the ester bonds of pimeloyl-ACP esters. The chain is Pimeloyl-[acyl-carrier protein] methyl ester esterase from Escherichia coli O45:K1 (strain S88 / ExPEC).